Consider the following 299-residue polypeptide: Ankyrin repeat domain-containing protein 54 (299 aa).

The disordered stretch occupies residues 1-27; the sequence is MAATGGGAEDESRSGRSSSEGECAVAP. An N-acetylalanine modification is found at Ala2. The residue at position 62 (Ser62) is a Phosphoserine. Residues 98–116 carry the Nuclear localization signal (NLS) motif; that stretch reads RRLGPTGKEVHALKRLRDS. ANK repeat units follow at residues 108–137, 141–170, 174–203, and 207–239; these read HALKRLRDSANANDIETVQQLLEDGADPCA, KGRTALHFASCNGNDQIVQLLLDHGADPNQ, LGNTPLHLAACTNHVPVITTLLRGGARVDA, and AGRTPLHLAKSKLNILQEGHSQCLEAVRLEVKQ. The interval 140 to 240 is LYN-binding; that stretch reads DKGRTALHFA…EAVRLEVKQI (101 aa). Positions 282 to 292 match the Nuclear export signal (NES) motif; sequence LLASFTSLSLQ.

As to quaternary structure, interacts (via ankyrin repeat region) with LYN (via SH3-domain) in an activation-independent status of LYN. Forms a multiprotein complex with LYN and HCLS1. Interacts with TSN2, VAV1, DBNL and LASP1.

The protein resides in the nucleus. It is found in the cytoplasm. The protein localises to the midbody. In terms of biological role, plays an important role in regulating intracellular signaling events associated with erythroid terminal differentiation. The protein is Ankyrin repeat domain-containing protein 54 (Ankrd54) of Rattus norvegicus (Rat).